Here is a 222-residue protein sequence, read N- to C-terminus: Putative hemin import ATP-binding protein HrtA (222 aa).

The 220-residue stretch at Leu3 to Ser222 folds into the ABC transporter domain. Gly39–Thr46 is an ATP binding site.

The protein belongs to the ABC transporter superfamily. HrtA family. As to quaternary structure, the complex is composed of two ATP-binding proteins (HrtA), two transmembrane proteins (HrtB) and a solute-binding protein.

The protein resides in the cell membrane. In terms of biological role, part of the ABC transporter complex hrt involved in hemin import. Responsible for energy coupling to the transport system. In Staphylococcus epidermidis (strain ATCC 12228 / FDA PCI 1200), this protein is Putative hemin import ATP-binding protein HrtA (hrtA).